The chain runs to 267 residues: 4-hydroxy-tetrahydrodipicolinate reductase (267 aa).

NAD(+)-binding positions include Gly-8–Met-13 and Glu-34. NADP(+) is bound at residue Arg-35. NAD(+)-binding positions include Gly-98 to Thr-100 and Ala-122 to Met-125. His-155 serves as the catalytic Proton donor/acceptor. Residue His-156 coordinates (S)-2,3,4,5-tetrahydrodipicolinate. Catalysis depends on Lys-159, which acts as the Proton donor. (S)-2,3,4,5-tetrahydrodipicolinate is bound at residue Gly-165 to Thr-166.

The protein belongs to the DapB family.

It is found in the cytoplasm. It carries out the reaction (S)-2,3,4,5-tetrahydrodipicolinate + NAD(+) + H2O = (2S,4S)-4-hydroxy-2,3,4,5-tetrahydrodipicolinate + NADH + H(+). The catalysed reaction is (S)-2,3,4,5-tetrahydrodipicolinate + NADP(+) + H2O = (2S,4S)-4-hydroxy-2,3,4,5-tetrahydrodipicolinate + NADPH + H(+). It participates in amino-acid biosynthesis; L-lysine biosynthesis via DAP pathway; (S)-tetrahydrodipicolinate from L-aspartate: step 4/4. Functionally, catalyzes the conversion of 4-hydroxy-tetrahydrodipicolinate (HTPA) to tetrahydrodipicolinate. The protein is 4-hydroxy-tetrahydrodipicolinate reductase of Geotalea daltonii (strain DSM 22248 / JCM 15807 / FRC-32) (Geobacter daltonii).